Reading from the N-terminus, the 954-residue chain is Valine--tRNA ligase (954 aa).

Residues 48–58 (PNVTGSLHMGH) carry the 'HIGH' region motif. The short motif at 560–564 (KMSKS) is the 'KMSKS' region element. Residue K563 participates in ATP binding. Residues 883 to 954 (AGFINKEAEL…QTQYQAIENL (72 aa)) adopt a coiled-coil conformation.

Belongs to the class-I aminoacyl-tRNA synthetase family. ValS type 1 subfamily. In terms of assembly, monomer.

It localises to the cytoplasm. The catalysed reaction is tRNA(Val) + L-valine + ATP = L-valyl-tRNA(Val) + AMP + diphosphate. Catalyzes the attachment of valine to tRNA(Val). As ValRS can inadvertently accommodate and process structurally similar amino acids such as threonine, to avoid such errors, it has a 'posttransfer' editing activity that hydrolyzes mischarged Thr-tRNA(Val) in a tRNA-dependent manner. The polypeptide is Valine--tRNA ligase (Actinobacillus pleuropneumoniae serotype 5b (strain L20)).